Consider the following 378-residue polypeptide: Nucleosome assembly protein 1;1 (378 aa).

Positions 33–87 (VNALKDKLQSLAGQHTDVLEALSPNVRKRVEYLREIQGQHDEIELKFFEERAALE) form a coiled coil. The Nuclear export signal motif lies at 54 to 69 (LSPNVRKRVEYLREIQ). The Nuclear localization signal signature appears at 230–235 (KKKPKK). The tract at residues 306–378 (AVQAEDFDDM…ADQPADCKQQ (73 aa)) is disordered. Acidic residues predominate over residues 308–344 (QAEDFDDMEDDEEDDEDDDEDEEEEEEDEDEDEDDEE). The Nuclear localization signal signature appears at 348 to 352 (KPKKK). Over residues 356–378 (KPKLPSKGGAQGGADQPADCKQQ) the composition is skewed to low complexity. C375 carries the cysteine methyl ester modification. C375 carries the S-farnesyl cysteine lipid modification. Positions 376–378 (KQQ) are cleaved as a propeptide — removed in mature form.

It belongs to the nucleosome assembly protein (NAP) family.

The protein resides in the nucleus. Its subcellular location is the cytoplasm. Its function is as follows. May modulate chromatin structure by regulation of nucleosome assembly/disassembly. This chain is Nucleosome assembly protein 1;1 (NAP1;1), found in Oryza sativa subsp. japonica (Rice).